We begin with the raw amino-acid sequence, 165 residues long: MAAAATSKITLTSSDGVDITIDRQVAERSILIKNMLKDLGDSGEAIPIPNVNESVLKKVIEWCKHHKGDPPSTGDDDVDSRRKTTDIDEWDQKFMQVDQEMLFEIILAANYLDIKALLDVGCKTVANMIKGKSPEEIRKTFNIQNDFTPEEEDQIRRENEWAEDR.

The segment at Ile-106–Arg-165 is interaction with the F-box domain of F-box proteins.

Belongs to the SKP1 family. Component of the SCF (SKP1-CUL1-F-box protein) E3 ubiquitin ligase complexes.

It functions in the pathway protein modification; protein ubiquitination. Functionally, essential component of the SCF (SKP1-CUL1-F-box protein) E3 ubiquitin ligase complexes, which mediate the ubiquitination and subsequent proteasomal degradation of target proteins. Controls sulfur metabolite repression, probably by mediating the inactivation or degradation of the metR transcription factor. The chain is E3 ubiquitin ligase complex SCF subunit sconC (sconC) from Arthroderma otae (Microsporum canis).